A 126-amino-acid polypeptide reads, in one-letter code: uncharacterized protein (126 aa).

The segment at 13–45 (VAPKAGREEEQPPPPAGLGCGARGEPGRGPLEH) is disordered.

It localises to the cytoplasm. It is found in the cytoskeleton. Its subcellular location is the cilium basal body. This is an uncharacterized protein from Homo sapiens (Human).